Here is a 299-residue protein sequence, read N- to C-terminus: Bifunctional protein FolD 1 (299 aa).

Residues 168 to 170 (GRS), serine 193, and isoleucine 234 each bind NADP(+).

The protein belongs to the tetrahydrofolate dehydrogenase/cyclohydrolase family. In terms of assembly, homodimer.

The catalysed reaction is (6R)-5,10-methylene-5,6,7,8-tetrahydrofolate + NADP(+) = (6R)-5,10-methenyltetrahydrofolate + NADPH. It catalyses the reaction (6R)-5,10-methenyltetrahydrofolate + H2O = (6R)-10-formyltetrahydrofolate + H(+). The protein operates within one-carbon metabolism; tetrahydrofolate interconversion. Its function is as follows. Catalyzes the oxidation of 5,10-methylenetetrahydrofolate to 5,10-methenyltetrahydrofolate and then the hydrolysis of 5,10-methenyltetrahydrofolate to 10-formyltetrahydrofolate. The chain is Bifunctional protein FolD 1 from Mesorhizobium japonicum (strain LMG 29417 / CECT 9101 / MAFF 303099) (Mesorhizobium loti (strain MAFF 303099)).